The sequence spans 822 residues: ATP-dependent zinc metalloprotease FTSH 7, chloroplastic (822 aa).

Low complexity-rich tracts occupy residues 1 to 34 (MASASAAAETLAAASLPVASPSRSLLRPLPRRAS), 80 to 94 (AEASGPGEASSSSSG), and 101 to 122 (AAAAAEAGGDGASTSTTSAAAT). Disordered stretches follow at residues 1-44 (MASA…ASVR) and 67-136 (PAAR…ENKW). A chloroplast-targeting transit peptide spans 1–70 (MASASAAAET…RVLRRPPAAR (70 aa)). 2 helical membrane passes run 154-174 (IVQGREMGFLLLQLGFAIFAL) and 288-308 (GGLLNSALVALIYVVLIAVVL). 386–393 (GLPGTGKT) is a binding site for ATP. Zn(2+) is bound at residue His-611. Residue Glu-612 is part of the active site. Positions 615 and 694 each coordinate Zn(2+).

In the N-terminal section; belongs to the AAA ATPase family. This sequence in the C-terminal section; belongs to the peptidase M41 family. Requires Zn(2+) as cofactor.

It localises to the plastid. The protein resides in the chloroplast thylakoid membrane. Probable ATP-dependent zinc metallopeptidase. This chain is ATP-dependent zinc metalloprotease FTSH 7, chloroplastic (FTSH7), found in Oryza sativa subsp. japonica (Rice).